A 230-amino-acid chain; its full sequence is Orotate phosphoribosyltransferase (230 aa).

5-phospho-alpha-D-ribose 1-diphosphate-binding positions include Arg-107, Lys-108, Lys-111, His-113, and 133-141 (EDLTTAGGS). Orotate is bound at residue Thr-137.

Belongs to the purine/pyrimidine phosphoribosyltransferase family. PyrE subfamily. In terms of assembly, homodimer. Mg(2+) is required as a cofactor.

The catalysed reaction is orotidine 5'-phosphate + diphosphate = orotate + 5-phospho-alpha-D-ribose 1-diphosphate. It participates in pyrimidine metabolism; UMP biosynthesis via de novo pathway; UMP from orotate: step 1/2. In terms of biological role, catalyzes the transfer of a ribosyl phosphate group from 5-phosphoribose 1-diphosphate to orotate, leading to the formation of orotidine monophosphate (OMP). The polypeptide is Orotate phosphoribosyltransferase (Allorhizobium ampelinum (strain ATCC BAA-846 / DSM 112012 / S4) (Agrobacterium vitis (strain S4))).